The following is a 464-amino-acid chain: UDP-N-acetylmuramate--L-alanine ligase (464 aa).

An ATP-binding site is contributed by 112–118 (GTHGKTT).

Belongs to the MurCDEF family.

It is found in the cytoplasm. It carries out the reaction UDP-N-acetyl-alpha-D-muramate + L-alanine + ATP = UDP-N-acetyl-alpha-D-muramoyl-L-alanine + ADP + phosphate + H(+). It functions in the pathway cell wall biogenesis; peptidoglycan biosynthesis. Its function is as follows. Cell wall formation. This is UDP-N-acetylmuramate--L-alanine ligase from Chromobacterium violaceum (strain ATCC 12472 / DSM 30191 / JCM 1249 / CCUG 213 / NBRC 12614 / NCIMB 9131 / NCTC 9757 / MK).